We begin with the raw amino-acid sequence, 373 residues long: Chaperone protein DnaJ (373 aa).

The J domain occupies 4-68 (DYYEILGLTK…VKREQYNQFG (65 aa)). The CR-type zinc-finger motif lies at 142 to 224 (GKEIVEPLEK…CKGKTHTKTT (83 aa)). Residues Cys-155, Cys-158, Cys-172, Cys-175, Cys-198, Cys-201, Cys-212, and Cys-215 each contribute to the Zn(2+) site. CXXCXGXG motif repeat units lie at residues 155-162 (CNTCNGSG), 172-179 (CTQCSGMG), 198-205 (CSKCNGIG), and 212-219 (CLICKGKT).

The protein belongs to the DnaJ family. As to quaternary structure, homodimer. The cofactor is Zn(2+).

It localises to the cytoplasm. Participates actively in the response to hyperosmotic and heat shock by preventing the aggregation of stress-denatured proteins and by disaggregating proteins, also in an autonomous, DnaK-independent fashion. Unfolded proteins bind initially to DnaJ; upon interaction with the DnaJ-bound protein, DnaK hydrolyzes its bound ATP, resulting in the formation of a stable complex. GrpE releases ADP from DnaK; ATP binding to DnaK triggers the release of the substrate protein, thus completing the reaction cycle. Several rounds of ATP-dependent interactions between DnaJ, DnaK and GrpE are required for fully efficient folding. Also involved, together with DnaK and GrpE, in the DNA replication of plasmids through activation of initiation proteins. This chain is Chaperone protein DnaJ, found in Mycoplasma mobile (strain ATCC 43663 / 163K / NCTC 11711) (Mesomycoplasma mobile).